Reading from the N-terminus, the 353-residue chain is Quinolinate synthase (353 aa).

Iminosuccinate contacts are provided by His47 and Ser68. Cys113 is a binding site for [4Fe-4S] cluster. Iminosuccinate-binding positions include 139-141 and Ser156; that span reads YAN. Cys200 contributes to the [4Fe-4S] cluster binding site. Iminosuccinate is bound by residues 226–228 and Thr243; that span reads HPE. Cys297 serves as a coordination point for [4Fe-4S] cluster.

Belongs to the quinolinate synthase family. Type 1 subfamily. [4Fe-4S] cluster serves as cofactor.

It localises to the cytoplasm. It carries out the reaction iminosuccinate + dihydroxyacetone phosphate = quinolinate + phosphate + 2 H2O + H(+). It participates in cofactor biosynthesis; NAD(+) biosynthesis; quinolinate from iminoaspartate: step 1/1. Functionally, catalyzes the condensation of iminoaspartate with dihydroxyacetone phosphate to form quinolinate. This chain is Quinolinate synthase, found in Yersinia pseudotuberculosis serotype O:3 (strain YPIII).